The following is a 120-amino-acid chain: MARIAGVNIPNNAHIVIGLQAIYGIGATRAKLICEAANIAPDTKAKDLDETQLDALRDQVAKYEVEGDLRREVTMSIKRLMDMGCYRGFRHRRGLPCRGQRTRTNARTRKGPRKAIAGKK.

Positions 96 to 120 are disordered; it reads PCRGQRTRTNARTRKGPRKAIAGKK.

This sequence belongs to the universal ribosomal protein uS13 family. As to quaternary structure, part of the 30S ribosomal subunit. Forms a loose heterodimer with protein S19. Forms two bridges to the 50S subunit in the 70S ribosome.

In terms of biological role, located at the top of the head of the 30S subunit, it contacts several helices of the 16S rRNA. In the 70S ribosome it contacts the 23S rRNA (bridge B1a) and protein L5 of the 50S subunit (bridge B1b), connecting the 2 subunits; these bridges are implicated in subunit movement. Contacts the tRNAs in the A and P-sites. This Neisseria gonorrhoeae (strain ATCC 700825 / FA 1090) protein is Small ribosomal subunit protein uS13.